A 142-amino-acid chain; its full sequence is Sec-independent protein translocase protein TatB (142 aa).

Residues 1–21 traverse the membrane as a helical segment; that stretch reads MFDIGASELLVLVIVAIVVIG. The tract at residues 75-142 is disordered; it reads RETAAQETAA…PAARPGSQQP (68 aa). Over residues 76–94 the composition is skewed to low complexity; that stretch reads ETAAQETAAAQGQTPAAAE. The segment covering 123–133 has biased composition (basic and acidic residues); it reads AKVEARVEEAP.

This sequence belongs to the TatB family. The Tat system comprises two distinct complexes: a TatABC complex, containing multiple copies of TatA, TatB and TatC subunits, and a separate TatA complex, containing only TatA subunits. Substrates initially bind to the TatABC complex, which probably triggers association of the separate TatA complex to form the active translocon.

The protein resides in the cell inner membrane. In terms of biological role, part of the twin-arginine translocation (Tat) system that transports large folded proteins containing a characteristic twin-arginine motif in their signal peptide across membranes. Together with TatC, TatB is part of a receptor directly interacting with Tat signal peptides. TatB may form an oligomeric binding site that transiently accommodates folded Tat precursor proteins before their translocation. This Novosphingobium aromaticivorans (strain ATCC 700278 / DSM 12444 / CCUG 56034 / CIP 105152 / NBRC 16084 / F199) protein is Sec-independent protein translocase protein TatB.